Here is an 865-residue protein sequence, read N- to C-terminus: Alanine--tRNA ligase (865 aa).

Residues His-554, His-558, Cys-656, and His-660 each contribute to the Zn(2+) site.

It belongs to the class-II aminoacyl-tRNA synthetase family. Zn(2+) serves as cofactor.

The protein resides in the cytoplasm. The catalysed reaction is tRNA(Ala) + L-alanine + ATP = L-alanyl-tRNA(Ala) + AMP + diphosphate. Its function is as follows. Catalyzes the attachment of alanine to tRNA(Ala) in a two-step reaction: alanine is first activated by ATP to form Ala-AMP and then transferred to the acceptor end of tRNA(Ala). Also edits incorrectly charged Ser-tRNA(Ala) and Gly-tRNA(Ala) via its editing domain. This Francisella tularensis subsp. holarctica (strain LVS) protein is Alanine--tRNA ligase.